We begin with the raw amino-acid sequence, 502 residues long: 4-hydroxy-3-methylbut-2-enyl diphosphate reductase, chloroplastic (502 aa).

A chloroplast-targeting transit peptide spans 1–48 (MQVLPQTRVQGVPSGRNLSCSKAVGGTPLRALTRDVVRPARSVNVHVV). Cysteine 140 serves as a coordination point for [4Fe-4S] cluster. (2E)-4-hydroxy-3-methylbut-2-enyl diphosphate is bound at residue histidine 170. Cysteine 232 lines the [4Fe-4S] cluster pocket. A (2E)-4-hydroxy-3-methylbut-2-enyl diphosphate-binding site is contributed by histidine 260. Glutamate 262 functions as the Proton donor in the catalytic mechanism. Residue threonine 325 coordinates (2E)-4-hydroxy-3-methylbut-2-enyl diphosphate. Cysteine 363 contacts [4Fe-4S] cluster. (2E)-4-hydroxy-3-methylbut-2-enyl diphosphate is bound by residues 398 to 400 (SSN) and serine 461.

Belongs to the IspH family. Homodimer. Requires [4Fe-4S] cluster as cofactor.

It localises to the plastid. The protein resides in the chloroplast stroma. It catalyses the reaction dimethylallyl diphosphate + 2 oxidized [2Fe-2S]-[ferredoxin] + H2O = (2E)-4-hydroxy-3-methylbut-2-enyl diphosphate + 2 reduced [2Fe-2S]-[ferredoxin] + 2 H(+). The enzyme catalyses isopentenyl diphosphate + 2 oxidized [2Fe-2S]-[ferredoxin] + H2O = (2E)-4-hydroxy-3-methylbut-2-enyl diphosphate + 2 reduced [2Fe-2S]-[ferredoxin] + 2 H(+). The protein operates within isoprenoid biosynthesis; dimethylallyl diphosphate biosynthesis; dimethylallyl diphosphate from (2E)-4-hydroxy-3-methylbutenyl diphosphate: step 1/1. It functions in the pathway isoprenoid biosynthesis; isopentenyl diphosphate biosynthesis via DXP pathway; isopentenyl diphosphate from 1-deoxy-D-xylulose 5-phosphate: step 6/6. In terms of biological role, enzyme of the plastid non-mevalonate pathway for isoprenoid biosynthesis that converts 1-hydroxy-2-methyl-2-(E)-butenyl 4-diphosphate into isopentenyl diphosphate (IPP) and dimethylallyl diphosphate (DMAPP). This chain is 4-hydroxy-3-methylbut-2-enyl diphosphate reductase, chloroplastic, found in Botryococcus braunii (Green alga).